The sequence spans 476 residues: Nyctalopin (476 aa).

Positions 1 to 18 (MLVLLLHAVVLGLPSAWA) are cleaved as a signal peptide. LRR repeat units lie at residues 60–84 (VSIDLDRNGLRFLGERAFGTLPSLR), 85–108 (RLSLRHNNLSFITPGAFKGLPRLA), 110–133 (LRLAHNGDLRYLHARTFAALSRLR), 134–157 (RLDLAACRLFSVPERLLAELPALR), 159–181 (LAAFDNLFRRVPGALRGLANLTH), 182–204 (AHLERGRIEAVASSSLQGLRRLR), 205–228 (SLSLQANRVRAVHAGAFGDCGVLE), 229–252 (HLLLNDNLLAELPADAFRGLRRLR), 254–276 (LNLGGNALDRVARAWFADLAELE), 277–300 (LLYLDRNSIAFVEEGAFQNLSGLL), and 302–324 (LHLNGNRLTVLAWVAFQPGFFLG). N-linked (GlcNAc...) asparagine glycosylation occurs at Asn-92. N-linked (GlcNAc...) asparagine glycosylation occurs at Asn-178. Residue Asn-295 is glycosylated (N-linked (GlcNAc...) asparagine). In terms of domain architecture, LRRCT spans 336-387 (DCRLEWLRDWMEGSGRVTDVPCASPGSVAGLDLSQVTFGRSSDGLCVDPEEL). N-linked (GlcNAc...) asparagine glycans are attached at residues Asn-388, Asn-427, and Asn-434.

This sequence belongs to the small leucine-rich proteoglycan (SLRP) family. SLRP class IV subfamily. Expressed in kidney and retina. Also at low levels in brain, testis and muscle. Within the retina, expressed in the inner segment of photoreceptors, outer and inner nuclear layers and the ganglion cell layer.

It is found in the secreted. The protein resides in the extracellular space. The protein localises to the extracellular matrix. This is Nyctalopin (NYX) from Homo sapiens (Human).